Here is a 313-residue protein sequence, read N- to C-terminus: Pseudouridine kinase (313 aa).

It belongs to the carbohydrate kinase PfkB family.

It carries out the reaction pseudouridine + ATP = psi-UMP + ADP + H(+). Catalyzes the phosphorylation of pseudouridine to pseudouridine 5'-phosphate (PsiMP). This Escherichia coli (strain K12) protein is Pseudouridine kinase (psuK).